The following is a 108-amino-acid chain: uncharacterized protein (108 aa).

The span at Gly-39–Pro-68 shows a compositional bias: low complexity. The tract at residues Gly-39–Trp-95 is disordered. Over residues Arg-69–Pro-80 the composition is skewed to basic residues.

This is an uncharacterized protein from Acidithiobacillus ferridurans.